The sequence spans 392 residues: Putative glutamate--cysteine ligase 2 (392 aa).

The interval Met1–Arg21 is disordered. Residues Ala9–Ala19 are compositionally biased toward low complexity.

It belongs to the glutamate--cysteine ligase type 2 family. YbdK subfamily.

It catalyses the reaction L-cysteine + L-glutamate + ATP = gamma-L-glutamyl-L-cysteine + ADP + phosphate + H(+). ATP-dependent carboxylate-amine ligase which exhibits weak glutamate--cysteine ligase activity. The polypeptide is Putative glutamate--cysteine ligase 2 (Mycobacterium ulcerans (strain Agy99)).